A 420-amino-acid chain; its full sequence is Beta-arrestin-2 (420 aa).

Phosphotyrosine is present on tyrosine 48. 2 positions are modified to hydroxyproline; by PHD2: proline 176 and proline 181. The interaction with TRAF6 stretch occupies residues 240–409; it reads ADICLFSTAQ…EDFARLRLKG (170 aa). Position 360 is a phosphoserine (serine 360). Residues 374–420 are interaction with AP2B1; sequence PETDAPVDTNLIEFETNYATDDDIVFEDFARLRLKGLKDEDYDDQFC. A Phosphothreonine modification is found at threonine 393. The [DE]-X(1,2)-F-X-X-[FL]-X-X-X-R motif motif lies at 396 to 406; sequence DIVFEDFARLR.

It belongs to the arrestin family. Homooligomer; the self-association is mediated by InsP6-binding. Heterooligomer with ARRB1; the association is mediated by InsP6-binding. Interacts with ADRB2 and CHRM2. Interacts with PDE4A. Interacts with PDE4D. Interacts with MAPK10, MAPK1 and MAPK3. Interacts with DRD2. Interacts with FSHR. Interacts with CLTC. Interacts with HTR2C. Interacts with CRR5. Interacts with CXCR4. Interacts with SRC. Interacts with DUSP16; the interaction is interrupted by stimulation of AGTR1 and activation of MAPK10. Interacts with CHUK; the interaction is enhanced stimulation of ADRB2. Interacts with RELA. Interacts with MDM2; the interaction is enhanced by activation of GPCRs. Interacts with SLC9A5. Interacts with TRAF6. Interacts with IGF1R. Interacts with ENG. Interacts with KIR2DL1, KIR2DL3 and KIR2DL4. Interacts with LDLR. Interacts with AP2B1. Interacts with C5AR1. Interacts with RAF1. Interacts with MAP2K1. Interacts with MAPK1. Interacts with MAPK10; the interaction enhances MAPK10 activation by MAP3K5. Interacts with MAP2K4; the interaction is enhanced by presence of MAP3K5 and MAPK10. Interacts with MAP3K5. Interacts with AKT1. Interacts with IKBKB and MAP3K14. Interacts with SMO (activated). Interacts with GSK3A and GSK3B. Associates with protein phosphatase 2A (PP2A). Interacts with CXCR4; the interaction is dependent on C-terminal phosphorylation of CXCR4 and allows activation of MAPK1 and MAPK3. Interacts with GPR143. Interacts with HCK and CXCR1 (phosphorylated). Interacts with ACKR3 and ACKR4. Interacts with ARRDC1; the interaction is direct. Interacts with GPR61, GPR62 and GPR135. Interacts (via NACHT and LRR domains) with NLRP3; this interaction is direct and inducible by omega-3 polyunsaturated fatty acids (PUFAs). Interacts with FFAR4 (via C-terminus); this interaction is stimulated by long-chain fatty acids (LCFAs). Interacts with GPR35. Interacts with GPR84. Interacts with TIGIT; this interaction inhibits the NF-kappa-B pathway. Interacts with TGFBR3. In terms of processing, phosphorylated at Thr-382 in the cytoplasm; probably dephosphorylated at the plasma membrane. The phosphorylation does not regulate internalization and recycling of ADRB2, interaction with clathrin or AP2B1. The ubiquitination status appears to regulate the formation and trafficking of beta-arrestin-GPCR complexes and signaling. Ubiquitination appears to occur GPCR-specific. Ubiquitinated by MDM2; the ubiquitination is required for rapid internalization of ADRB2. Deubiquitinated by USP33; the deubiquitination leads to a dissociation of the beta-arrestin-GPCR complex. Stimulation of a class A GPCR, such as ADRB2, induces transient ubiquitination and subsequently promotes association with USP33. Stimulation of a class B GPCR promotes a sustained ubiquitination. Deubiquitinated by USP20; allowing USP20 to deubiquitinate TRAF6 leading to inhibition of NF-kappa-B signaling. Post-translationally, hydroxylation by PHD2 modulates the rate of internalization by slowing down recruitment to the plasma membrane and inhibiting subsequent co-internalization with class A receptors. As to expression, found in a variety of tissues. The short isoform is the most abundant form in all tissues.

The protein resides in the cytoplasm. The protein localises to the nucleus. It is found in the cell membrane. It localises to the membrane. Its subcellular location is the clathrin-coated pit. The protein resides in the cytoplasmic vesicle. In terms of biological role, functions in regulating agonist-mediated G-protein coupled receptor (GPCR) signaling by mediating both receptor desensitization and resensitization processes. During homologous desensitization, beta-arrestins bind to the GPRK-phosphorylated receptor and sterically preclude its coupling to the cognate G-protein; the binding appears to require additional receptor determinants exposed only in the active receptor conformation. The beta-arrestins target many receptors for internalization by acting as endocytic adapters (CLASPs, clathrin-associated sorting proteins) and recruiting the GPRCs to the adapter protein 2 complex 2 (AP-2) in clathrin-coated pits (CCPs). However, the extent of beta-arrestin involvement appears to vary significantly depending on the receptor, agonist and cell type. Internalized arrestin-receptor complexes traffic to intracellular endosomes, where they remain uncoupled from G-proteins. Two different modes of arrestin-mediated internalization occur. Class A receptors, like ADRB2, OPRM1, ENDRA, D1AR and ADRA1B dissociate from beta-arrestin at or near the plasma membrane and undergo rapid recycling. Class B receptors, like AVPR2, AGTR1, NTSR1, TRHR and TACR1 internalize as a complex with arrestin and traffic with it to endosomal vesicles, presumably as desensitized receptors, for extended periods of time. Receptor resensitization then requires that receptor-bound arrestin is removed so that the receptor can be dephosphorylated and returned to the plasma membrane. Mediates endocytosis of CCR7 following ligation of CCL19 but not CCL21. Involved in internalization of P2RY1, P2RY4, P2RY6 and P2RY11 and ATP-stimulated internalization of P2RY2. Involved in phosphorylation-dependent internalization of OPRD1 and subsequent recycling or degradation. Involved in ubiquitination of IGF1R. Beta-arrestins function as multivalent adapter proteins that can switch the GPCR from a G-protein signaling mode that transmits short-lived signals from the plasma membrane via small molecule second messengers and ion channels to a beta-arrestin signaling mode that transmits a distinct set of signals that are initiated as the receptor internalizes and transits the intracellular compartment. Acts as a signaling scaffold for MAPK pathways such as MAPK1/3 (ERK1/2) and MAPK10 (JNK3). ERK1/2 and JNK3 activated by the beta-arrestin scaffold are largely excluded from the nucleus and confined to cytoplasmic locations such as endocytic vesicles, also called beta-arrestin signalosomes. Acts as a signaling scaffold for the AKT1 pathway. GPCRs for which the beta-arrestin-mediated signaling relies on both ARRB1 and ARRB2 (codependent regulation) include ADRB2, F2RL1 and PTH1R. For some GPCRs the beta-arrestin-mediated signaling relies on either ARRB1 or ARRB2 and is inhibited by the other respective beta-arrestin form (reciprocal regulation). Increases ERK1/2 signaling in AGTR1- and AVPR2-mediated activation (reciprocal regulation). Involved in CCR7-mediated ERK1/2 signaling involving ligand CCL19. Is involved in type-1A angiotensin II receptor/AGTR1-mediated ERK activity. Is involved in type-1A angiotensin II receptor/AGTR1-mediated MAPK10 activity. Is involved in dopamine-stimulated AKT1 activity in the striatum by disrupting the association of AKT1 with its negative regulator PP2A. Involved in AGTR1-mediated chemotaxis. Appears to function as signaling scaffold involved in regulation of MIP-1-beta-stimulated CCR5-dependent chemotaxis. Involved in attenuation of NF-kappa-B-dependent transcription in response to GPCR or cytokine stimulation by interacting with and stabilizing CHUK. Suppresses UV-induced NF-kappa-B-dependent activation by interacting with CHUK. The function is promoted by stimulation of ADRB2 and dephosphorylation of ARRB2. Involved in p53/TP53-mediated apoptosis by regulating MDM2 and reducing the MDM2-mediated degradation of p53/TP53. May serve as nuclear messenger for GPCRs. Upon stimulation of OR1D2, may be involved in regulation of gene expression during the early processes of fertilization. Also involved in regulation of receptors other than GPCRs. Involved in endocytosis of TGFBR2 and TGFBR3 and down-regulates TGF-beta signaling such as NF-kappa-B activation. Involved in endocytosis of low-density lipoprotein receptor/LDLR. Involved in endocytosis of smoothened homolog/Smo, which also requires GRK2. Involved in endocytosis of SLC9A5. Involved in endocytosis of ENG and subsequent TGF-beta-mediated ERK activation and migration of epithelial cells. Involved in Toll-like receptor and IL-1 receptor signaling through the interaction with TRAF6 which prevents TRAF6 autoubiquitination and oligomerization required for activation of NF-kappa-B and JUN. Involved in insulin resistance by acting as insulin-induced signaling scaffold for SRC, AKT1 and INSR. Involved in regulation of inhibitory signaling of natural killer cells by recruiting PTPN6 and PTPN11 to KIR2DL1. Involved in IL8-mediated granule release in neutrophils. Involved in the internalization of the atypical chemokine receptor ACKR3. Acts as an adapter protein coupling FFAR4 receptor to specific downstream signaling pathways, as well as mediating receptor endocytosis. During the activation step of NLRP3 inflammasome, directly associates with NLRP3 leading to inhibition of pro-inflammatory cytokine release and inhibition of inflammation. This is Beta-arrestin-2 (ARRB2) from Bos taurus (Bovine).